The primary structure comprises 1755 residues: MESQQLSNYPHISHGSACASVTSKEVHTNQDPLDVSASKIQEYDKASTKANSQQTTTPASSAVPENPHHASPQPASVPPPQNGPYPQQCMMTQNQANPSGWSFYGHPSMIPYTPYQMSPMYFPPGPQSQFPQYPSSVGTPLSTPSPESGNTFTDSSSADSDMTSTKKYVRPPPMLTSPNDFPNWVKTYIKFLQNSNLGGIIPTVNGKPVRQITDDELTFLYNTFQIFAPSQFLPTWVKDILSVDYTDIMKILSKSIEKMQSDTQEANDIVTLANLQYNGSTPADAFETKVTNIIDRLNNNGIHINNKVACQLIMRGLSGEYKFLRYTRHRHLNMTVAELFLDIHAIYEEQQGSRNSKPNYRRNPSDEKNDSRSYTNTTKPKVIARNPQKTNNSKSKTARAHNVSTSNNSPSTDNDSISKSTTEPIQLNNKHDLHLGQKLTESTVNHTNHSDDELPGHLLLDSGASRTLIRSAHHIHSASSNPDINVVDAQKRNIPINAIGDLQFHFQDNTKTSIKVLHTPNIAYDLLSLNELAAVDITACFTKNVLERSDGTVLAPIVKYGDFYWVSKKYLLPSNISVPTINNVHTSESTRKYPYPFIHRMLAHANAQTIRYSLKNNTITYFNESDVDWSSAIDYQCPDCLIGKSTKHRHIKGSRLKYQNSYEPFQYLHTDIFGPVHNLPNSAPSYFISFTDETTKFRWVYPLHDRREDSILDVFTTILAFIKNQFQASVLVIQMDRGSEYTNRTLHKFLEKNGITPCYTTTADSRAHGVAERLNRTLLDDCRTQLQCSGLPNHLWFSAIEFSTIVRNSLASPKSKKSARQHAGLAGLDISTLLPFGQPVIVNDHNPNSKIHPRGIPGYALHPSRNSYGYIIYLPSLKKTVDTTNYVILQGKESRLDQFNYDALTFDEDLNRLTASYHSFIASNEIQESNDLNIESDHDFQSDIELHPEQPRNVLSKAVSPTDSTPPSTHTEDSKRVSKTNIRAPREVDPNISESNILPSKKRSSTPQISNIESTGSGGMHKLNVPLLAPMSQSNTHESSHASKSKDFRHSDSYSENETNHTNVPISSTGGTNNKTVPQISDQETEKRIIHRSPSIDASPPENNSSHNIVPIKTPTTVSEQNTEESIIADLPLPDLPPESPTEFPDPFKELPPINSHQTNSSLGGIGDSNAYTTINSKKRSLEDNETEIKVSRDTWNTKNMRSLEPPRSKKRIHLIAAVKAVKSIKPIRTTLRYDEAITYNKDIKEKEKYIEAYHKEVNQLLKMNTWDTDKYYDRKEIDPKRVINSMFIFNRKRDGTHKARFVARGDIQHPDTYDSGMQSNTVHHYALMTSLSLALDNNYYITQLDISSAYLYADIKEELYIRPPPHLGMNDKLIRLKKSLYGLKQSGANWYETIKSYLIKQCGMEEVRGWSCVFKNSQVTICLFVDDMILFSKDLNANKKIITTLKKQYDTKIINLGESDNEIQYDILGLEIKYQRGKYMKLGMENSLTEKIPKLNVPLNPKGRKLSAPGQPGLYIDQDELEIDEDEYKEKVHEMQKLIGLASYVGYKFRFDLLYYINTLAQHILFPSRQVLDMTYELIQFMWDTRDKQLIWHKNKPTEPDNKLVAISDASYGNQPYYKSQIGNIYLLNGKVIGGKSTKASLTCTSTTEAEIHAISESVPLLNNLSHLVQELNKKPITKGLLTDSKSTISIIISNNEEKFRNRFFGTKAMRLRDEVSGNHLHVCYIETKKNIADVMTKPLPIKTFKLLTNKWIH.

3 stretches are compositionally biased toward polar residues: residues 1-10, 48-60, and 127-152; these read MESQQLSNYP, TKAN…TPAS, and QSQF…GNTF. Disordered stretches follow at residues 1-93, 126-173, and 352-421; these read MESQ…MMTQ, PQSQ…RPPP, and GSRN…SKST. A compositionally biased stretch (low complexity) spans 153-165; that stretch reads TDSSSADSDMTST. Residues 299-401 form an RNA-binding region; it reads NNGIHINNKV…NSKSKTARAH (103 aa). The span at 402–418 shows a compositional bias: low complexity; sequence NVSTSNNSPSTDNDSIS. The active-site For protease activity; shared with dimeric partner is Asp-461. Residues 583 to 640 form an integrase-type zinc finger-like region; the sequence is NVHTSESTRKYPYPFIHRMLAHANAQTIRYSLKNNTITYFNESDVDWSSAIDYQCPDC. The region spanning 660 to 835 is the Integrase catalytic domain; that stretch reads NSYEPFQYLH…AGLDISTLLP (176 aa). Mg(2+) contacts are provided by Asp-671 and Asp-736. Disordered regions lie at residues 956–1087, 1092–1111, and 1130–1187; these read SKAV…ETEK, RSPS…NIVP, and DLPL…DNET. The segment covering 960–969 has biased composition (low complexity); that stretch reads SPTDSTPPST. Residues 1005–1015 show a composition bias toward polar residues; sequence STPQISNIEST. Residues 1038-1053 are compositionally biased toward basic and acidic residues; it reads ESSHASKSKDFRHSDS. Composition is skewed to polar residues over residues 1054-1082 and 1101-1111; these read YSEN…QISD and PENNSSHNIVP. The Bipartite nuclear localization signal motif lies at 1178-1212; sequence KKRSLEDNETEIKVSRDTWNTKNMRSLEPPRSKKR. A Reverse transcriptase Ty1/copia-type domain is found at 1338–1476; it reads NNYYITQLDI…DILGLEIKYQ (139 aa). Residues Asp-1346, Asp-1427, Asp-1428, Asp-1610, Glu-1652, and Asp-1685 each contribute to the Mg(2+) site. An RNase H Ty1/copia-type domain is found at 1610 to 1752; sequence DASYGNQPYY…IKTFKLLTNK (143 aa).

In terms of assembly, the capsid protein forms a homotrimer, from which the VLPs are assembled. The protease is a homodimer, whose active site consists of two apposed aspartic acid residues. In terms of processing, initially, virus-like particles (VLPs) are composed of the structural unprocessed proteins Gag and Gag-Pol, and also contain the host initiator methionine tRNA (tRNA(i)-Met) which serves as a primer for minus-strand DNA synthesis, and a dimer of genomic Ty RNA. Processing of the polyproteins occurs within the particle and proceeds by an ordered pathway, called maturation. First, the protease (PR) is released by autocatalytic cleavage of the Gag-Pol polyprotein yielding capsid protein p45 and a Pol-p154 precursor protein. This cleavage is a prerequisite for subsequent processing of Pol-p154 at the remaining sites to release the mature structural and catalytic proteins. Maturation takes place prior to the RT reaction and is required to produce transposition-competent VLPs.

It localises to the cytoplasm. Its subcellular location is the nucleus. The catalysed reaction is DNA(n) + a 2'-deoxyribonucleoside 5'-triphosphate = DNA(n+1) + diphosphate. It catalyses the reaction Endonucleolytic cleavage to 5'-phosphomonoester.. Functionally, capsid protein (CA) is the structural component of the virus-like particle (VLP), forming the shell that encapsulates the retrotransposons dimeric RNA genome. The particles are assembled from trimer-clustered units and there are holes in the capsid shells that allow for the diffusion of macromolecules. CA also has nucleocapsid-like chaperone activity, promoting primer tRNA(i)-Met annealing to the multipartite primer-binding site (PBS), dimerization of Ty1 RNA and initiation of reverse transcription. In terms of biological role, the aspartyl protease (PR) mediates the proteolytic cleavages of the Gag and Gag-Pol polyproteins after assembly of the VLP. Its function is as follows. Reverse transcriptase/ribonuclease H (RT) is a multifunctional enzyme that catalyzes the conversion of the retro-elements RNA genome into dsDNA within the VLP. The enzyme displays a DNA polymerase activity that can copy either DNA or RNA templates, and a ribonuclease H (RNase H) activity that cleaves the RNA strand of RNA-DNA heteroduplexes during plus-strand synthesis and hydrolyzes RNA primers. The conversion leads to a linear dsDNA copy of the retrotransposon that includes long terminal repeats (LTRs) at both ends. Integrase (IN) targets the VLP to the nucleus, where a subparticle preintegration complex (PIC) containing at least integrase and the newly synthesized dsDNA copy of the retrotransposon must transit the nuclear membrane. Once in the nucleus, integrase performs the integration of the dsDNA into the host genome. The chain is Transposon Ty1-DR5 Gag-Pol polyprotein (TY1B-DR5) from Saccharomyces cerevisiae (strain ATCC 204508 / S288c) (Baker's yeast).